Here is a 719-residue protein sequence, read N- to C-terminus: Histone-lysine N-methyltransferase SETDB2 (719 aa).

A compositionally biased stretch (polar residues) spans 72–82; it reads SQKEVNAQSSD. Residues 72 to 102 form a disordered region; sequence SQKEVNAQSSDPMPVTQKEQENKSNAFPSTS. The 73-residue stretch at 157 to 229 folds into the MBD domain; the sequence is LNLKGENPLQ…DNFSFNTYVQ (73 aa). A Pre-SET domain is found at 291–364; the sequence is DSCDCSEGCI…LCQNRVVQHG (74 aa). C293, C295, C299, C305, C307, C345, C349, C351, and C356 together coordinate Zn(2+). The SET domain maps to 367–694; the sequence is VRLQVFKTEQ…ARTELTWDYG (328 aa). Residues 377–379 and D418 each bind S-adenosyl-L-methionine; that span reads KGW. The segment at 508 to 547 is disordered; it reads FVSSESVTPEDNDGFKPPREHLNSKTKGAQKDSSSNHVDE. The segment covering 520–530 has biased composition (basic and acidic residues); that stretch reads DGFKPPREHLN. Residues 532 to 543 show a composition bias toward polar residues; that stretch reads KTKGAQKDSSSN. S-adenosyl-L-methionine-binding positions include R648 and 651-652; that span reads NH. Positions 654, 707, 709, and 714 each coordinate Zn(2+).

The protein belongs to the class V-like SAM-binding methyltransferase superfamily. As to expression, ubiquitous. Highest expression in heart, testis and ovary.

The protein localises to the nucleus. The protein resides in the chromosome. The catalysed reaction is N(6),N(6)-dimethyl-L-lysyl(9)-[histone H3] + S-adenosyl-L-methionine = N(6),N(6),N(6)-trimethyl-L-lysyl(9)-[histone H3] + S-adenosyl-L-homocysteine + H(+). In terms of biological role, histone methyltransferase involved in left-right axis specification in early development and mitosis. Specifically trimethylates 'Lys-9' of histone H3 (H3K9me3). H3K9me3 is a specific tag for epigenetic transcriptional repression that recruits HP1 (CBX1, CBX3 and/or CBX5) proteins to methylated histones. Contributes to H3K9me3 in both the interspersed repetitive elements and centromere-associated repeats. Plays a role in chromosome condensation and segregation during mitosis. The protein is Histone-lysine N-methyltransferase SETDB2 (SETDB2) of Homo sapiens (Human).